The sequence spans 253 residues: TasA anchoring/assembly protein (253 aa).

Positions 1 to 32 are cleaved as a signal peptide; sequence MFRLFHNQQKAKTKLKVLLIFQLSVIFSLTAA. Residues 50–57 are important for TasA fiber formation; it reads TFDVSLQT. Basic and acidic residues predominate over residues 190 to 241; sequence EKPTVPKKETKSDVKKENETTQKDIPEKTMKEETSQEAVTKEKETQSDQKES. The disordered stretch occupies residues 190–253; it reads EKPTVPKKET…EDEKSNEADQ (64 aa).

The protein resides in the secreted. The protein localises to the cell wall. Its function is as follows. Required for biofilm formation. Required for the proper anchoring and polymerization of TasA amyloid fibers at the cell surface. Is also a minor component of TasA fibers. The sequence is that of TasA anchoring/assembly protein from Bacillus subtilis (strain 168).